The sequence spans 390 residues: MKATGIVVEYNPFHNGHKLHLNKARELTQADVVIAVMSGSFVQRGEPAILPKWERTRMALAAGVDMVVELPVSFATQHATIFAEEAVRILDAIHVDTLFFGSEHGVAEDFTLAAKKVVENEARFDEAIQLALVDKKTSYARAYTEAFKKLFGQNLLDITKPNNILGFHYALAAQKQNPSISLHSIPREHAGYHDEEANHDQIASATAIRKLILAGKLEEASHYLPASSIAILRNYEGPFLSWTDYWSFLQYRLIQAGSEELEGIRGVSEGIQNRMQQAATKAQNFSDFIELTKTKRYSNARLQRTALQILLNARSQTSSPYIRILGMNKTGQQYLSLHKKNISLPIITTVSKAPAGLLEEELRATNIYTLAKGLENYQAGDFHIPPILTL.

ATP-binding positions include 7–20, glycine 101, asparagine 162, and arginine 187; that span reads VVEY…HKLH.

The protein belongs to the TmcAL family.

The protein resides in the cytoplasm. It carries out the reaction cytidine(34) in elongator tRNA(Met) + acetate + ATP = N(4)-acetylcytidine(34) in elongator tRNA(Met) + AMP + diphosphate. Its function is as follows. Catalyzes the formation of N(4)-acetylcytidine (ac(4)C) at the wobble position of elongator tRNA(Met), using acetate and ATP as substrates. First activates an acetate ion to form acetyladenylate (Ac-AMP) and then transfers the acetyl group to tRNA to form ac(4)C34. This chain is tRNA(Met) cytidine acetate ligase, found in Listeria monocytogenes serotype 4b (strain CLIP80459).